Here is a 588-residue protein sequence, read N- to C-terminus: Transcription factor tau 60 kDa subunit (588 aa).

The sufficient for SPT15-binding stretch occupies residues 399–588; that stretch reads LPKLPENFSM…VYCGTTLEVM (190 aa).

As to quaternary structure, heterodimer with TFC6. Component of the TFIIIC complex composed of TFC1, TFC3, TFC4, TFC6, TFC7 and TFC8. The subunits are organized in two globular domains, tauA and tauB, connected by a proteolysis-sensitive and flexible linker. Interacts with SPT15 and directly with TFC6.

It localises to the nucleus. In terms of biological role, TFIIIC mediates tRNA and 5S RNA gene activation by binding to intragenic promoter elements. Upstream of the transcription start site, TFIIIC assembles the initiation complex TFIIIB-TFIIIC-tDNA, which is sufficient for RNA polymerase III recruitment and function. Part of the tauB domain of TFIIIC that binds boxB DNA promoter sites of tRNA and similar genes. Plays a role in TFIIB assembly through its interaction with SPT15/TBP. Essential for cell viability. The protein is Transcription factor tau 60 kDa subunit (TFC8) of Saccharomyces cerevisiae (strain ATCC 204508 / S288c) (Baker's yeast).